The following is a 212-amino-acid chain: Urease accessory protein UreG (212 aa).

19 to 26 (GPVGSGKT) contributes to the GTP binding site.

This sequence belongs to the SIMIBI class G3E GTPase family. UreG subfamily. In terms of assembly, homodimer. UreD, UreF and UreG form a complex that acts as a GTP-hydrolysis-dependent molecular chaperone, activating the urease apoprotein by helping to assemble the nickel containing metallocenter of UreC. The UreE protein probably delivers the nickel.

The protein localises to the cytoplasm. In terms of biological role, facilitates the functional incorporation of the urease nickel metallocenter. This process requires GTP hydrolysis, probably effectuated by UreG. The polypeptide is Urease accessory protein UreG (Vibrio parahaemolyticus).